The primary structure comprises 566 residues: Glutamate--tRNA ligase (566 aa).

Residues 104-114 carry the 'HIGH' region motif; the sequence is PNPDGPLHLGN.

This sequence belongs to the class-I aminoacyl-tRNA synthetase family. Glutamate--tRNA ligase type 2 subfamily.

The protein localises to the cytoplasm. The enzyme catalyses tRNA(Glu) + L-glutamate + ATP = L-glutamyl-tRNA(Glu) + AMP + diphosphate. Functionally, catalyzes the attachment of glutamate to tRNA(Glu) in a two-step reaction: glutamate is first activated by ATP to form Glu-AMP and then transferred to the acceptor end of tRNA(Glu). The protein is Glutamate--tRNA ligase of Metallosphaera sedula (strain ATCC 51363 / DSM 5348 / JCM 9185 / NBRC 15509 / TH2).